The primary structure comprises 522 residues: MSNADELLRIEGIRKTFPGVVALDGVDFDLRRGEVHVLLGENGAGKSTLIKMLSGAYRPDGGRVLVEGEEVRIHGAQDSEALGIATIYQEFNLVPDLTVAENIFLGRQPRRLGLIDRKKMEADAAELLARVGVQVSPRARVRELGIARLQMVEIAKALSLNARVLIMDEPTAVLTSEEVEKLFAIVRQLREDGVGIVFITHHLEEIAALGDRVTVIRDGKSVGQVPASTSEDELVRLMVGRSIEQQYPRERPDSGAALLSVEGLTRDGVFHDVSFEVRAGEVVGVAGLVGAGRTEVVRAVFGADPYDRGSVQVAGARVPRHDVSAAMSAGIGLVPEDRKGQGLVLDASVEENLGLVTMRAATRGGLVDLKGQRDAAARVAGQLGVRMAGLGQHVRTLSGGNQQKVVIGKWLLADTKVLILDEPTRGIDVGAKVEIYQLINELTAAGAAVLMISSDLPEVLGMSDRVLVMAQGRIAGELGADEATQDSVMALAVSTNQYKPDKSDKPDASAGKTDQKEAPRGH.

2 consecutive ABC transporter domains span residues 8–243 and 249–496; these read LRIE…GRSI and RERP…VSTN. 40 to 47 provides a ligand contact to ATP; that stretch reads GENGAGKS. The tract at residues 492 to 522 is disordered; sequence AVSTNQYKPDKSDKPDASAGKTDQKEAPRGH. Residues 499–522 show a composition bias toward basic and acidic residues; it reads KPDKSDKPDASAGKTDQKEAPRGH.

Belongs to the ABC transporter superfamily. Ribose importer (TC 3.A.1.2.1) family. As to quaternary structure, the complex is composed of an ATP-binding protein (RbsA), two transmembrane proteins (RbsC) and a solute-binding protein (RbsB).

It is found in the cell membrane. The enzyme catalyses D-ribose(out) + ATP + H2O = D-ribose(in) + ADP + phosphate + H(+). Its function is as follows. Part of the ABC transporter complex RbsABC involved in ribose import. Responsible for energy coupling to the transport system. This chain is Ribose import ATP-binding protein RbsA 1, found in Streptomyces avermitilis (strain ATCC 31267 / DSM 46492 / JCM 5070 / NBRC 14893 / NCIMB 12804 / NRRL 8165 / MA-4680).